The chain runs to 449 residues: MPLPLGDPLALAVSPQLGYIRITAMPRWLQLPGMSALGILYSLTRVFGLMATANWSPRGIKRVRQSLYLRIHGCVMLIFVGCFSPFAFWCIFQRMAFLRQNRILLMIGFNRYVLLLVCAFMTLWIHCFKQAEIIGCLNRLLKCRRRLRRLMHTRKLKDSMDCLATKGHLLEVVVLLSSYLLSMAQPIQILKDDPEVRRNFMYACSLVFVSVCQAILQLSLGMYTMAILFLGHLVRHSNLLLAKILADAEHIFESSQKAGFWPNRQELYKGQQKWLALELWRLLHVHHQLLKLHRSICSLCAVQAVCFLGFVPLECTIHLFFTYFMKYSKFILRKYGRSFPLNYFAIAFLVGLFTNLLLVILPTYYSERRFNCTREIIKGGGLAFPSRITVKQLRHTMHFYGLYLKNVEHVFAVSACGLFKLNNAILFCIVGAILEYLMILIQFDKVLNK.

Topologically, residues 1-27 are cytoplasmic; sequence MPLPLGDPLALAVSPQLGYIRITAMPR. The chain crosses the membrane as a helical span at residues 28–50; the sequence is WLQLPGMSALGILYSLTRVFGLM. At 51-70 the chain is on the extracellular side; it reads ATANWSPRGIKRVRQSLYLR. Residues 71-93 form a helical membrane-spanning segment; it reads IHGCVMLIFVGCFSPFAFWCIFQ. Residues 94-102 lie on the Cytoplasmic side of the membrane; that stretch reads RMAFLRQNR. Residues 103-125 traverse the membrane as a helical segment; that stretch reads ILLMIGFNRYVLLLVCAFMTLWI. Residues 126–205 lie on the Extracellular side of the membrane; sequence HCFKQAEIIG…VRRNFMYACS (80 aa). Residues 206–228 form a helical membrane-spanning segment; that stretch reads LVFVSVCQAILQLSLGMYTMAIL. At 229–298 the chain is on the cytoplasmic side; the sequence is FLGHLVRHSN…LLKLHRSICS (70 aa). Residues 299–321 traverse the membrane as a helical segment; sequence LCAVQAVCFLGFVPLECTIHLFF. Topologically, residues 322–340 are extracellular; sequence TYFMKYSKFILRKYGRSFP. The helical transmembrane segment at 341–363 threads the bilayer; sequence LNYFAIAFLVGLFTNLLLVILPT. Residues 364-420 are Cytoplasmic-facing; that stretch reads YYSERRFNCTREIIKGGGLAFPSRITVKQLRHTMHFYGLYLKNVEHVFAVSACGLFK. The helical transmembrane segment at 421-443 threads the bilayer; it reads LNNAILFCIVGAILEYLMILIQF. The Extracellular segment spans residues 444–449; that stretch reads DKVLNK.

The protein belongs to the insect chemoreceptor superfamily. Gustatory receptor (GR) family. Gr77a subfamily. As to expression, in larvae, is expressed in dorsal pharyngeal sense organ.

It localises to the cell membrane. In terms of biological role, probable gustatory receptor which mediates acceptance or avoidance behavior, depending on its substrates. In Drosophila melanogaster (Fruit fly), this protein is Putative gustatory receptor 77a (Gr77a).